We begin with the raw amino-acid sequence, 344 residues long: MGATRARIAIDAMGGDHAPDEIVAGALRAQAELDADVLLVGDPDRLEASIKSHSDSVPVEIIPSEGLIEMNEEPISALRRKRKASINVAMDLVKKKKADAVVSAGHSGAAMAAALLRLGRIPGIDRPAIGGVFPTIIAGKPVLVLDVGANVDCRPAFLDQFATMGTIYSEYVLGTEAPKVGLLNIGEESCKGNEVSVQTYQLLEQNPHVDFIGNAEGRDVLSGQFDVIVCDGFTGNILLKFAEAVGEVALQILREELPRGIHGKVGTGILKPNLRRIKQRMDHAEHGGGLLLGVAGVCIISHGSSQAPSIFNAIRLAKEAADNQVSQRIQSCYQQTVTAASNGE.

Belongs to the PlsX family. Homodimer. Probably interacts with PlsY.

The protein resides in the cytoplasm. The enzyme catalyses a fatty acyl-[ACP] + phosphate = an acyl phosphate + holo-[ACP]. It participates in lipid metabolism; phospholipid metabolism. Catalyzes the reversible formation of acyl-phosphate (acyl-PO(4)) from acyl-[acyl-carrier-protein] (acyl-ACP). This enzyme utilizes acyl-ACP as fatty acyl donor, but not acyl-CoA. The chain is Phosphate acyltransferase from Acaryochloris marina (strain MBIC 11017).